A 504-amino-acid polypeptide reads, in one-letter code: Probable phenylalanine--tRNA ligase beta subunit (504 aa).

The region spanning 270-346 (IKDKSYLLSI…ICYGFNNINM (77 aa)) is the B5 domain. Residues aspartate 324, aspartate 330, glutamate 333, and aspartate 334 each coordinate Mg(2+).

It belongs to the phenylalanyl-tRNA synthetase beta subunit family. Type 2 subfamily. In terms of assembly, tetramer of two alpha and two beta subunits. Mg(2+) serves as cofactor.

Its subcellular location is the cytoplasm. The catalysed reaction is tRNA(Phe) + L-phenylalanine + ATP = L-phenylalanyl-tRNA(Phe) + AMP + diphosphate + H(+). This Vairimorpha ceranae (strain BRL01) (Microsporidian parasite) protein is Probable phenylalanine--tRNA ligase beta subunit.